A 1591-amino-acid chain; its full sequence is Rho guanine nucleotide exchange factor TIAM1 (1591 aa).

The tract at residues 1 to 70 (MGNAESQNVD…TPSIPQSLAE (70 aa)) is disordered. Gly-2 carries N-myristoyl glycine lipidation. Over residues 8–19 (NVDHEFYGEKHA) the composition is skewed to basic and acidic residues. A compositionally biased stretch (basic residues) spans 20–49 (SLGRKHTSRSLRLSHKTRRTRHASSGKAIH). The span at 53-67 (EVSTRSSSTPSIPQS) shows a compositional bias: low complexity. Phosphoserine is present on residues Ser-231, Ser-356, and Ser-358. Disordered stretches follow at residues 305-380 (QISL…DRAR) and 393-422 (MSTT…SPGQ). Positions 340–359 (TTDTDLLSRRSNATNSSYSP) are enriched in polar residues. Positions 367 to 376 (GSDSGSSSTG) are enriched in low complexity. Positions 412–422 (QSSGTLSSPGQ) are enriched in polar residues. A PH 1 domain is found at 434–549 (VRKAGALAVK…TAIHSACAAA (116 aa)). Residue Ser-695 is modified to Phosphoserine. Residues 765 to 832 (TPSWFCLPNN…QPEEDIYELL (68 aa)) enclose the RBD domain. Tyr-829 carries the post-translational modification Phosphotyrosine; by NTRK2. Residues 845 to 908 (NIHIEKSDAA…NNRAAGTLNS (64 aa)) form the PDZ domain. The tract at residues 933 to 1034 (GVELLENPPH…TSPQLATTRQ (102 aa)) is disordered. Polar residues predominate over residues 958-975 (LTSNPGHSLSSEQGSSAE). Positions 977–990 (APEEGEGPDLESSD) are enriched in acidic residues. The segment covering 1014-1028 (PSDSSPSPQDATSPQ) has biased composition (low complexity). A DH domain is found at 1040 to 1234 (KLRKVICELL…NKVASHINEM (195 aa)). In terms of domain architecture, PH 2 spans 1261 to 1397 (DLSMGDLLLH…KSVHSILRDK (137 aa)). Tyr-1323 is subject to Phosphotyrosine. Residues Lys-1404 and Lys-1420 each participate in a glycyl lysine isopeptide (Lys-Gly) (interchain with G-Cter in ubiquitin) cross-link. A disordered region spans residues 1456–1481 (TIDSDAISASSPEKEPQQPAGGGDTD). Residue Ser-1519 is modified to Phosphoserine.

Belongs to the TIAM family. As to quaternary structure, component of the Par polarity complex, composed of at least phosphorylated PRKCZ, PARD3 and TIAM1. Interacts with BAIAP2. Interacts (via PDZ domain) with CNTNAP4, SDC1 and SDC3 (via C-terminus). Interacts with CD44, PARD3 and MAPK8IP2. Interacts with EPHA8; regulates clathrin-mediated endocytosis of EPHA8. Interacts with NTRK2; mediates the activation of RAC1 by BDNF. Post-translationally, ubiquitinated. Undergoes 'Lys-48' ubiquitination at Lys-1404 and Lys-1420 by a CUL3(KBTBD6/7) E3 ubiquitin ligase complex composed of CUL3, RBX1, KBTBD6 and KBTBD7. 'Lys-48' ubiquitination at Lys-1404 and Lys-1420 triggers proteasomal degradation. Ubiquitination at Lys-1404 and Lys-1420 by CUL3(KBTBD6/7) also requires the membrane-associated protein GABARAP and may therefore be spatially restricted within the cell. In terms of tissue distribution, highly expressed in brain and testis and at low or moderate levels in almost all other normal tissues. Found in virtually all analyzed tumor cell lines including B- and T-lymphomas, neuroblastomas, melanomas and carcinomas.

The protein resides in the cell junction. The protein localises to the cell membrane. In terms of biological role, guanyl-nucleotide exchange factor that activates RHO-like proteins and connects extracellular signals to cytoskeletal activities. Activates RAC1, CDC42, and to a lesser extent RHOA and their downstream signaling to regulate processes like cell adhesion and cell migration. This Mus musculus (Mouse) protein is Rho guanine nucleotide exchange factor TIAM1.